Here is a 448-residue protein sequence, read N- to C-terminus: Dual specificity mitogen-activated protein kinase kinase 5 (448 aa).

The tract at residues 18–25 (VIRIKIPN) is interaction with MAPK7. The PB1 domain occupies 18–109 (VIRIKIPNSG…EPLQIFPRAC (92 aa)). Positions 64-68 (DEDGD) are interaction with MAP3K2/MAP3K3. Positions 116-144 (NIHGLKVNTRAGPSQHTSPVVSDSLPSNS) are disordered. Residues 117–131 (IHGLKVNTRAGPSQH) are interaction with MAPK7. A compositionally biased stretch (polar residues) spans 126 to 144 (AGPSQHTSPVVSDSLPSNS). Residues 166–419 (IRYRDTLGHG…PEELMGHPFI (254 aa)) form the Protein kinase domain. ATP contacts are provided by residues 172–180 (LGHGNGGTV) and Lys195. Asp283 acts as the Proton acceptor in catalysis. Residue Ser311 is modified to Phosphoserine. Phosphothreonine is present on Thr315.

Belongs to the protein kinase superfamily. STE Ser/Thr protein kinase family. MAP kinase kinase subfamily. Interacts with PARD6A, MAP3K3 and MAPK7. Forms a complex with SQSTM1 and PRKCZ or PRKCI. The cofactor is Mg(2+). In terms of processing, activated by phosphorylation on Ser/Thr by MAP kinase kinase kinases.

It is found in the cytoplasm. It catalyses the reaction L-seryl-[protein] + ATP = O-phospho-L-seryl-[protein] + ADP + H(+). The catalysed reaction is L-threonyl-[protein] + ATP = O-phospho-L-threonyl-[protein] + ADP + H(+). It carries out the reaction L-tyrosyl-[protein] + ATP = O-phospho-L-tyrosyl-[protein] + ADP + H(+). Its function is as follows. Acts as a scaffold for the formation of a ternary MAP3K2/MAP3K3-MAP3K5-MAPK7 signaling complex. Activation of this pathway appears to play a critical role in protecting cells from stress-induced apoptosis, neuronal survival and cardiac development and angiogenesis. As part of the MAPK/ERK signaling pathway, acts as a negative regulator of apoptosis in cardiomyocytes via promotion of STUB1/CHIP-mediated ubiquitination and degradation of ICER-type isoforms of CREM. This Mus musculus (Mouse) protein is Dual specificity mitogen-activated protein kinase kinase 5 (Map2k5).